Consider the following 454-residue polypeptide: Mitochondrial distribution and morphology protein 10 (454 aa).

It belongs to the MDM10 family. In terms of assembly, component of the ER-mitochondria encounter structure (ERMES) or MDM complex, composed of MMM1, MDM10, MDM12 and MDM34. Associates with the mitochondrial outer membrane sorting assembly machinery SAM(core) complex.

The protein resides in the mitochondrion outer membrane. In terms of biological role, component of the ERMES/MDM complex, which serves as a molecular tether to connect the endoplasmic reticulum and mitochondria. Components of this complex are involved in the control of mitochondrial shape and protein biogenesis and may function in phospholipid exchange. MDM10 is involved in the late assembly steps of the general translocase of the mitochondrial outer membrane (TOM complex). Functions in the TOM40-specific route of the assembly of outer membrane beta-barrel proteins, including the association of TOM40 with the receptor TOM22 and small TOM proteins. Can associate with the SAM(core) complex as well as the MDM12-MMM1 complex, both involved in late steps of the major beta-barrel assembly pathway, that is responsible for biogenesis of all outer membrane beta-barrel proteins. May act as a switch that shuttles between both complexes and channels precursor proteins into the TOM40-specific pathway. Plays a role in mitochondrial morphology and in the inheritance of mitochondria. This is Mitochondrial distribution and morphology protein 10 from Candida tropicalis (strain ATCC MYA-3404 / T1) (Yeast).